Consider the following 201-residue polypeptide: Elongation factor Ts (201 aa).

The tract at residues 81–84 is involved in Mg(2+) ion dislocation from EF-Tu; that stretch reads TDFV.

This sequence belongs to the EF-Ts family.

Its subcellular location is the cytoplasm. Functionally, associates with the EF-Tu.GDP complex and induces the exchange of GDP to GTP. It remains bound to the aminoacyl-tRNA.EF-Tu.GTP complex up to the GTP hydrolysis stage on the ribosome. The sequence is that of Elongation factor Ts from Syntrophus aciditrophicus (strain SB).